The primary structure comprises 153 residues: Inner membrane protein YjiG (153 aa).

Over 1–31 the chain is Periplasmic; that stretch reads MTTQVRKNVMDMFIDGARRGFTIATTNLLPN. A helical transmembrane segment spans residues 32 to 52; that stretch reads VVMAFVIIQALKITGLLDWVG. The Cytoplasmic segment spans residues 53–68; the sequence is HICEPVMALWGLPGEA. Helical transmembrane passes span 69–89 and 90–110; these read ATVL…AASL and ATAG…MYLM. The Cytoplasmic portion of the chain corresponds to 111 to 132; sequence GNPVQNVGRCLGTAEVNAKYYP. The chain crosses the membrane as a helical span at residues 133 to 153; sequence HIITVCVINALLSIWVMQLIV.

This sequence belongs to the SpmB family.

The protein localises to the cell inner membrane. The polypeptide is Inner membrane protein YjiG (yjiG) (Escherichia coli O157:H7).